The following is a 283-amino-acid chain: Phosphatidylglycerol--prolipoprotein diacylglyceryl transferase (283 aa).

Helical transmembrane passes span 21–41 (LAIR…LWLA), 60–80 (LLFA…VLFY), 95–115 (VWTG…AMLW), 124–144 (FFTI…AGRL), 176–196 (SQLY…NWFI), 203–223 (GAVS…VEYV), and 239–259 (MGQI…VWAF). R143 lines the a 1,2-diacyl-sn-glycero-3-phospho-(1'-sn-glycerol) pocket.

It belongs to the Lgt family.

The protein resides in the cell inner membrane. The enzyme catalyses L-cysteinyl-[prolipoprotein] + a 1,2-diacyl-sn-glycero-3-phospho-(1'-sn-glycerol) = an S-1,2-diacyl-sn-glyceryl-L-cysteinyl-[prolipoprotein] + sn-glycerol 1-phosphate + H(+). Its pathway is protein modification; lipoprotein biosynthesis (diacylglyceryl transfer). In terms of biological role, catalyzes the transfer of the diacylglyceryl group from phosphatidylglycerol to the sulfhydryl group of the N-terminal cysteine of a prolipoprotein, the first step in the formation of mature lipoproteins. This is Phosphatidylglycerol--prolipoprotein diacylglyceryl transferase from Aliivibrio salmonicida (strain LFI1238) (Vibrio salmonicida (strain LFI1238)).